A 187-amino-acid chain; its full sequence is MSRIGKKPIPVPRGVEVTITEENRVTVKGPKGTLSQQFSPEMLITHENGVITVARPSDDKRHRALHGLTRSLIANMVTGVTEGYQRILEITGIGYRAAREGKNLVLQVGFSHPIRVTPPEGITFEVLERRSANEPQQVIIRGIDKQKVGEEAAKLRALRPPEPYKGYGIKYRDERIRRKAGKAGKAR.

This sequence belongs to the universal ribosomal protein uL6 family. In terms of assembly, part of the 50S ribosomal subunit.

In terms of biological role, this protein binds to the 23S rRNA, and is important in its secondary structure. It is located near the subunit interface in the base of the L7/L12 stalk, and near the tRNA binding site of the peptidyltransferase center. This is Large ribosomal subunit protein uL6 from Roseiflexus sp. (strain RS-1).